The following is a 1401-amino-acid chain: DNA-directed RNA polymerase subunit beta' (1401 aa).

The Zn(2+) site is built by C70, C72, C85, and C88. Mg(2+)-binding residues include D460, D462, and D464. Residues C808, C882, C889, and C892 each contribute to the Zn(2+) site.

The protein belongs to the RNA polymerase beta' chain family. The RNAP catalytic core consists of 2 alpha, 1 beta, 1 beta' and 1 omega subunit. When a sigma factor is associated with the core the holoenzyme is formed, which can initiate transcription. It depends on Mg(2+) as a cofactor. Zn(2+) serves as cofactor.

The enzyme catalyses RNA(n) + a ribonucleoside 5'-triphosphate = RNA(n+1) + diphosphate. DNA-dependent RNA polymerase catalyzes the transcription of DNA into RNA using the four ribonucleoside triphosphates as substrates. The chain is DNA-directed RNA polymerase subunit beta' from Legionella pneumophila (strain Paris).